Consider the following 488-residue polypeptide: Dipeptide and tripeptide permease B (488 aa).

Over 1 to 27 (MSKTASVGLWDQPKPFFMIFFVELWER) the chain is Cytoplasmic. A helical transmembrane segment spans residues 28-48 (FGFYGVQGILAIYFVQQLGFS). The Periplasmic segment spans residues 49–52 (EEQS). The helical transmembrane segment at 53–73 (FITFGAFTALVYGLISVGGYV) threads the bilayer. At 74 to 82 (GDHILGTKR) the chain is on the cytoplasmic side. A helical transmembrane segment spans residues 83 to 103 (TIVLGAIVMAIGYYMIGLSIM). Over 104–106 (KPE) the chain is Periplasmic. The helical transmembrane segment at 107–127 (LIFYALGTVAVGNGLFKANPA) threads the bilayer. At 128–146 (SLLAKCYQPQDPRLDGAFT) the chain is on the cytoplasmic side. A helical membrane pass occupies residues 147-167 (LFYMSINLGSLFSLSLAPVIA). Residues 168 to 172 (EKYGY) lie on the Periplasmic side of the membrane. The helical transmembrane segment at 173 to 193 (TVTYNICGIGLIIALLVYIAC) threads the bilayer. Topologically, residues 194-211 (RRMVHNIGSAPDHHPVKP) are cytoplasmic. A helical membrane pass occupies residues 212–232 (IGLIAVLIGSVVMVGVCAWLL). Over 233–234 (HN) the chain is Periplasmic. A helical membrane pass occupies residues 235–255 (IKVANIALFAITTIVVLIFFW). Over 256–267 (QAFKQNRVGRNK) the chain is Cytoplasmic. Residues 268–288 (MFVAFILMLQAVVFFILYNQM) form a helical membrane-spanning segment. The Periplasmic segment spans residues 289–311 (PMSLNFFAINNVHHQILGFDVNP). The helical transmembrane segment at 312–332 (VSFQAFNPFWIIIVSPILAVV) threads the bilayer. At 333–348 (YTKLGAKGKDFSMPAK) the chain is on the cytoplasmic side. A helical transmembrane segment spans residues 349-369 (FTFGMFLCSLGFLTAAASGLF). The Periplasmic portion of the chain corresponds to 370-378 (ADAQGITSP). Residues 379-399 (WFIVLVYLFQSVGELMISALG) traverse the membrane as a helical segment. At 400-423 (LAMVAAFVPSYLTGFILGMWFLSQ) the chain is on the cytoplasmic side. Residues 424 to 444 (AVASMLASHVAALTATPVGVT) traverse the membrane as a helical segment. Over 445 to 455 (DPLQTLPIYMS) the chain is Periplasmic. A helical membrane pass occupies residues 456-476 (VFGKIGVATLIVAIIMTFMVP). The Cytoplasmic segment spans residues 477-488 (WLNRIMREEVKA).

The protein belongs to the major facilitator superfamily. Proton-dependent oligopeptide transporter (POT/PTR) (TC 2.A.17) family. DtpB subfamily.

Its subcellular location is the cell inner membrane. Proton-dependent permease that transports di- and tripeptides. This is Dipeptide and tripeptide permease B from Xenorhabdus bovienii (strain SS-2004) (Xenorhabdus nematophila subsp. bovienii).